Reading from the N-terminus, the 724-residue chain is Catalase-peroxidase (724 aa).

The disordered stretch occupies residues 1-26 (MDENKTKPTGKCPVMHGGNTSTGSSN). A cross-link (tryptophyl-tyrosyl-methioninium (Trp-Tyr) (with M-251)) is located at residues 98–225 (WHSAGSYRTT…LAAVQMGLIY (128 aa)). Residue His99 is the Proton acceptor of the active site. Residues 225-251 (YVNPEGVDGKSDPLRTAQDMRVTFSRM) constitute a cross-link (tryptophyl-tyrosyl-methioninium (Tyr-Met) (with W-98)). His266 lines the heme b pocket.

This sequence belongs to the peroxidase family. Peroxidase/catalase subfamily. Homodimer or homotetramer. The cofactor is heme b. In terms of processing, formation of the three residue Trp-Tyr-Met cross-link is important for the catalase, but not the peroxidase activity of the enzyme.

The enzyme catalyses H2O2 + AH2 = A + 2 H2O. It catalyses the reaction 2 H2O2 = O2 + 2 H2O. In terms of biological role, bifunctional enzyme with both catalase and broad-spectrum peroxidase activity. The protein is Catalase-peroxidase of Pectobacterium atrosepticum (strain SCRI 1043 / ATCC BAA-672) (Erwinia carotovora subsp. atroseptica).